Consider the following 279-residue polypeptide: tRNA-cytidine(32) 2-sulfurtransferase (279 aa).

Residues 46-51 (SGGKDS) carry the PP-loop motif motif. 3 residues coordinate [4Fe-4S] cluster: Cys121, Cys124, and Cys212.

This sequence belongs to the TtcA family. In terms of assembly, homodimer. Requires Mg(2+) as cofactor. [4Fe-4S] cluster is required as a cofactor.

It is found in the cytoplasm. It catalyses the reaction cytidine(32) in tRNA + S-sulfanyl-L-cysteinyl-[cysteine desulfurase] + AH2 + ATP = 2-thiocytidine(32) in tRNA + L-cysteinyl-[cysteine desulfurase] + A + AMP + diphosphate + H(+). It functions in the pathway tRNA modification. Functionally, catalyzes the ATP-dependent 2-thiolation of cytidine in position 32 of tRNA, to form 2-thiocytidine (s(2)C32). The sulfur atoms are provided by the cysteine/cysteine desulfurase (IscS) system. In Marinomonas sp. (strain MWYL1), this protein is tRNA-cytidine(32) 2-sulfurtransferase.